The following is a 312-amino-acid chain: Epoxyqueuosine reductase (312 aa).

D132 (proton donor) is an active-site residue. The 4Fe-4S ferredoxin-type 1 domain occupies 174–206; sequence EVLEADKPSKPICGECEKCIEACPTKAIEEPFI. C186, C189, C192, C196, C212, C240, C243, and C247 together coordinate [4Fe-4S] cluster. The region spanning 226 to 257 is the 4Fe-4S ferredoxin-type 2 domain; that stretch reads PENIINKMGNWIAGCDICQDVCPWNQKHIPST.

This sequence belongs to the QueG family. As to quaternary structure, monomer. Cob(II)alamin serves as cofactor. [4Fe-4S] cluster is required as a cofactor.

The protein localises to the cytoplasm. It catalyses the reaction epoxyqueuosine(34) in tRNA + AH2 = queuosine(34) in tRNA + A + H2O. It functions in the pathway tRNA modification; tRNA-queuosine biosynthesis. Its function is as follows. Catalyzes the conversion of epoxyqueuosine (oQ) to queuosine (Q), which is a hypermodified base found in the wobble positions of tRNA(Asp), tRNA(Asn), tRNA(His) and tRNA(Tyr). In Prochlorococcus marinus (strain NATL2A), this protein is Epoxyqueuosine reductase.